The primary structure comprises 211 residues: MNTIKILIGLLGIFLFSLSGIVSAQSDATTQLSQLLSNFRTYQAKFNQITFDGQDRVIQQSHGRVMIMRPGRFRWETDSPTKQIIITNGKTLWVYDVDLSQATQQPLAQKTNINPASLLSGSVKDLKQKFTITISPTPDAATFQLVPNLGKSLNFNWIRLKFSKKQLTEMTVLNNLDERSIFQFSQIKVNAPLSSTLFEFKPSRGIDVVKQ.

The first 24 residues, 1–24 (MNTIKILIGLLGIFLFSLSGIVSA), serve as a signal peptide directing secretion.

It belongs to the LolA family. In terms of assembly, monomer.

It is found in the periplasm. Participates in the translocation of lipoproteins from the inner membrane to the outer membrane. Only forms a complex with a lipoprotein if the residue after the N-terminal Cys is not an aspartate (The Asp acts as a targeting signal to indicate that the lipoprotein should stay in the inner membrane). The chain is Outer-membrane lipoprotein carrier protein from Coxiella burnetii (strain RSA 331 / Henzerling II).